The primary structure comprises 350 residues: 4-hydroxythreonine-4-phosphate dehydrogenase (350 aa).

Residues His-138 and Thr-139 each contribute to the substrate site. 3 residues coordinate a divalent metal cation: His-173, His-218, and His-273. Residues Lys-281, Asn-290, and Arg-299 each contribute to the substrate site.

This sequence belongs to the PdxA family. As to quaternary structure, homodimer. Zn(2+) is required as a cofactor. It depends on Mg(2+) as a cofactor. Requires Co(2+) as cofactor.

It is found in the cytoplasm. The enzyme catalyses 4-(phosphooxy)-L-threonine + NAD(+) = 3-amino-2-oxopropyl phosphate + CO2 + NADH. Its pathway is cofactor biosynthesis; pyridoxine 5'-phosphate biosynthesis; pyridoxine 5'-phosphate from D-erythrose 4-phosphate: step 4/5. Catalyzes the NAD(P)-dependent oxidation of 4-(phosphooxy)-L-threonine (HTP) into 2-amino-3-oxo-4-(phosphooxy)butyric acid which spontaneously decarboxylates to form 3-amino-2-oxopropyl phosphate (AHAP). This chain is 4-hydroxythreonine-4-phosphate dehydrogenase, found in Xanthobacter autotrophicus (strain ATCC BAA-1158 / Py2).